Consider the following 1513-residue polypeptide: MRVLSKSLAAMVAAATLVGGGAFAVAGTAYAADNDAITVTPNPWYANSFDGWGTSLAWFANATGSLGEESAITTNLGDDASKAKAVEYGKQLREQFYQSIFGDEGLDLNMARYNVGGGNASDVAYGYPFMRQGAAVPGTWKDDATGSGTYGNGVTTKQADKDKLAAAFDPTDDNQYDFSKSAAQDWWIERGATGDNPDITDVEAFANSAPWFLTNSGYATGGRNSGSNNLANPEKFAQYMAKNVEHLESLGANVDTVEPFNESETSYWGTPGDMASKYTDESDDNTKLINNYWDKYYSDKDRSVTPYSNALKKPQEGMHVSNAQQQQTITALAEALKDNDDTIIAATDATNSADFVKSYNQYPQAIKDLIGQYNVHAYSDSNQMQSRDIAQADGKKLSMSEVDGSWQSGSYNPYGFDNALGMMSKISSNVTRLQSKDFTFWQVVEDLYNMQMGSNVNPAGENTNWGTVLIDFDCTVAGMDGKLYSERRVNNNGGTTDGLEPCTVIANAKYNGVKAITHFIHAGDKVIANNDEDNNMTATSDDGKTQTVIHRNSGTSDQTFVIDLSKYGEIADNAYGELYLTTETSAEDKNAGVDSATPEVFAKTSNVKQAEGSVMIDKAAKTATVTVPARSIASIQLTGVTGYAKDAAVETGDTYQLVGKQSGKAVADTTSGDSALSLANVASDAENAKKQTWTFTQIEQPTDSERPDLKAYVITNAEGKVLVSKDGTNALSNETVGAAKSDPAAKWILNTSDGSTYQLLNAATKTNLDVDNSGTTVGTKVGLWQSPSGTSPSANQTWTLRNVTPTSQKTVNVQTAVNEKAVLPVEVTLYYTWGEGKATVANWDTSKVDVAKEGAYEATATATDVYGNEFNVTATVYVGALTVSDPVSATVLAGTSASEAKAALEAAPVYLHVKASPAFEGDAAKVTWNFDGLDTKLADAKAGDNIAVTGTYQLDDATTIALKGAIYVTAATPENVADTASNLTVTNQQTEYSKGDQWKKLTDGDTSAEAWVTWNSAGDYSASPTATIDFGSECELSSVTITYGDKAPASAKAEYTTDGETWMQFGSDVKPAAGQTVTFKADKGTVNATKMRIVNTVNNDYMNATEIQAFVTPVQGAAKNIAAASGTNFSVNFQEGASASKAIDGDTTSKGWSTWASTASTVDPVATFTFDEAQTITEVKTFFYYDGRASWPKSQTLEYQDEAGEWHGVGTKDGWKIQAGDAGSGSDGITAADTPTVDFVLGTPVKAKAIRLTNTLQDTKVYINVAEIQVFAQDSTVLTPQPASDATLGDLRLDGETVEGFDPSKTDYTVDLPVDAEANPVLQAFATDNAAAVKVTGDAVENGKLGGKAAITVTSADESETKTYTVTFNAFTLASLKVIGPTKTEYAIGDKLDTAGLKVTAVYQSGDKTKEVPVALDDPQLAIGSFDSTTAGKKAITVSYRGVTATFNVTVKANAVAPGPEEQKPGNTNKPGATGNGNKNTVANTGSSVAAIAGAVALLAAAAGALFMLRKRA.

A signal peptide spans 1–31; that stretch reads MRVLSKSLAAMVAAATLVGGGAFAVAGTAYA. The Ricin B-type lectin domain occupies 666–801; that stretch reads VADTTSGDSA…PSANQTWTLR (136 aa). F5/8 type C domains are found at residues 965-1112 and 1116-1273; these read AIYV…AFVT and GAAK…VFAQ. The disordered stretch occupies residues 1456-1480; sequence VAPGPEEQKPGNTNKPGATGNGNKN. Positions 1465-1480 are enriched in polar residues; that stretch reads PGNTNKPGATGNGNKN. Residues 1489-1509 traverse the membrane as a helical segment; sequence VAAIAGAVALLAAAAGALFML.

This sequence belongs to the glycosyl hydrolase 30 family.

Its subcellular location is the cell membrane. It carries out the reaction Hydrolysis of (1-&gt;6)-beta-D-galactosidic linkages in arabinogalactan proteins and (1-&gt;3):(1-&gt;6)-beta-galactans to yield (1-&gt;6)-beta-galactobiose as the final product.. Involved in the type II arabinogalactan (AG) side chains degradation. Specifically releases the non-reducing terminal beta-1,6-galactobiose (beta-1,6-Gal2) from both dearabinosylated larch AG and polymeric beta-1,6-galactan chains by an exo-mode of action. Shows lower activity with larch AG, and very weak activity with dearabinosylated gum arabic, gum arabic and potato galactan. Can probably release beta-1,6-Gal2 from the internal side chains of type II AG. The chain is Exo-beta-1,6-galactobiohydrolase from Bifidobacterium longum subsp. longum (strain ATCC 15707 / DSM 20219 / JCM 1217 / NCTC 11818 / E194b).